The following is a 583-amino-acid chain: Phosphoglucomutase, cytoplasmic (583 aa).

The tract at residues 1–20 is disordered; sequence MATFKVSRVETKPYDGQKPG. The alpha-D-glucose 1,6-bisphosphate site is built by arginine 25 and serine 124. Serine 124 acts as the Phosphoserine intermediate in catalysis. Residues serine 124, aspartate 300, aspartate 302, and aspartate 304 each contribute to the Mg(2+) site. Serine 124 carries the phosphoserine modification. Aspartate 304, arginine 305, threonine 368, glutamate 387, serine 389, and lysine 400 together coordinate alpha-D-glucose 1,6-bisphosphate.

It belongs to the phosphohexose mutase family. As to quaternary structure, monomer. It depends on Mg(2+) as a cofactor.

The protein resides in the cytoplasm. The enzyme catalyses alpha-D-glucose 1-phosphate = alpha-D-glucose 6-phosphate. It catalyses the reaction O-phospho-L-seryl-[protein] + alpha-D-glucose 1-phosphate = alpha-D-glucose 1,6-bisphosphate + L-seryl-[protein]. The catalysed reaction is alpha-D-glucose 1,6-bisphosphate + L-seryl-[protein] = O-phospho-L-seryl-[protein] + alpha-D-glucose 6-phosphate. Catalyzes the reversible isomerization of alpha-D-glucose 1-phosphate to alpha-D-glucose 6-phosphate. The mechanism proceeds via the intermediate compound alpha-D-glucose 1,6-bisphosphate. This enzyme participates in both the breakdown and synthesis of glucose. The protein is Phosphoglucomutase, cytoplasmic (PGM1) of Mesembryanthemum crystallinum (Common ice plant).